The following is a 341-amino-acid chain: Galactofuranose transporter permease protein YtfT (341 aa).

Residues 1-25 (MMPQSLPDTTTPKRRFRWPTGMPQL) are Cytoplasmic-facing. Residues 26–46 (VALLLVLLVDSLVAPHFWQVV) traverse the membrane as a helical segment. Over 47 to 65 (LQDGRLFGSPIDILNRAAP) the chain is Periplasmic. A run of 2 helical transmembrane segments spans residues 66–86 (VALL…DLSV) and 87–107 (GAVM…GFSL). Pro-108 is a topological domain (periplasmic). A helical membrane pass occupies residues 109-129 (IVLLSALGTGILAGLWNGILV). At 130 to 136 (AILKIQP) the chain is on the cytoplasmic side. The chain crosses the membrane as a helical span at residues 137–157 (FVATLILMVAGRGVAQLITAG). The Periplasmic segment spans residues 158 to 174 (QIVTFNSPDLSWFGSGS). A helical membrane pass occupies residues 175-195 (LLFLPTPVIIAVLTLILFWLL). Topologically, residues 196 to 223 (TRKTALGMFIEAVGINIRAAKNAGVNTR) are cytoplasmic. Residues 224 to 244 (IIVMLTYVLSGLCAAIAGIIV) traverse the membrane as a helical segment. The Periplasmic portion of the chain corresponds to 245 to 255 (AADIRGADANN). The chain crosses the membrane as a helical span at residues 256 to 276 (AGLWLELDAILAVVIGGGSLM). Over 277–281 (GGRFN) the chain is Cytoplasmic. Helical transmembrane passes span 282–302 (LLLS…ILLS) and 303–323 (GFPP…VLIV). Over 324-341 (QSQRFISLIKGVRSRDKT) the chain is Cytoplasmic.

This sequence belongs to the binding-protein-dependent transport system permease family. AraH/RbsC subfamily. The complex is composed of two ATP-binding proteins (YtfR), two transmembrane proteins (YtfT and YjfF) and a solute-binding protein (YtfQ).

Its subcellular location is the cell inner membrane. In terms of biological role, part of the ABC transporter complex YtfQRT-YjfF involved in galactofuranose transport. Probably responsible for the translocation of the substrate across the membrane. This chain is Galactofuranose transporter permease protein YtfT (ytfT), found in Escherichia coli (strain K12).